A 493-amino-acid chain; its full sequence is Ferruginol synthase 1 (493 aa).

Residues 2–22 (DSFPLLAALFFILAATWFISF) form a helical membrane-spanning segment. A heme-binding site is contributed by cysteine 437.

This sequence belongs to the cytochrome P450 family. Requires heme as cofactor. As to expression, expressed in leaf glandular trichomes.

Its subcellular location is the membrane. It carries out the reaction abieta-8,11,13-triene + reduced [NADPH--hemoprotein reductase] + O2 = ferruginol + oxidized [NADPH--hemoprotein reductase] + H2O + H(+). It catalyses the reaction ferruginol + reduced [NADPH--hemoprotein reductase] + O2 = 11-hydroxyferruginol + oxidized [NADPH--hemoprotein reductase] + H2O + H(+). The catalysed reaction is miltiradiene + 2 reduced [NADPH--hemoprotein reductase] + 2 O2 = 11-oxomiltiradiene + 2 oxidized [NADPH--hemoprotein reductase] + 3 H2O + 2 H(+). Its pathway is secondary metabolite biosynthesis; terpenoid biosynthesis. Functionally, monooxygenase involved in the biosynthesis of labdane-related diterpenes natural products. Catalyzes the oxidation of abietatriene to produce ferruginol. Catalyzes the oxidation of ferruginol at C-12 to produce 11-hydroxyferruginol. Ferruginol and 11-hydroxyferruginol are intermediates in the biosynthesis of carnosate, a potent antioxidant. May also convert miltiradiene into 11-oxomiltiradiene. This Rosmarinus officinalis (Rosemary) protein is Ferruginol synthase 1.